The sequence spans 470 residues: Acetyl-CoA decarbonylase/synthase complex subunit gamma 2 (470 aa).

A 4Fe-4S domain is found at 1–60; sequence MKINSPLEAYKYLPQTNCGECGQPTCMAFASTLIDRSGKTTDCPPLIKEKKFAKKLAELD. [4Fe-4S] cluster-binding residues include Cys-18, Cys-21, Cys-26, and Cys-43.

In terms of assembly, heterodimer of delta and gamma chains. The ACDS complex is made up of alpha, epsilon, beta, gamma and delta chains with a probable stoichiometry of (alpha(2)epsilon(2))(4)-beta(8)-(gamma(1)delta(1))(8). Corrinoid is required as a cofactor. The cofactor is [4Fe-4S] cluster.

It catalyses the reaction 5,6,7,8-tetrahydrosarcinapterin + methyl-Co(III)-[corrinoid Fe-S protein] = 5-methyltetrahydrosarcinapterin + Co(I)-[corrinoid Fe-S protein] + H(+). It participates in one-carbon metabolism; methanogenesis from acetate. Part of a complex that catalyzes the reversible cleavage of acetyl-CoA, allowing growth on acetate as sole source of carbon and energy. In Methanosarcina mazei (strain ATCC BAA-159 / DSM 3647 / Goe1 / Go1 / JCM 11833 / OCM 88) (Methanosarcina frisia), this protein is Acetyl-CoA decarbonylase/synthase complex subunit gamma 2.